Reading from the N-terminus, the 150-residue chain is UPF0260 protein PputGB1_4117 (150 aa).

This sequence belongs to the UPF0260 family.

This is UPF0260 protein PputGB1_4117 from Pseudomonas putida (strain GB-1).